Here is a 215-residue protein sequence, read N- to C-terminus: RNA pyrophosphohydrolase (215 aa).

In terms of domain architecture, Nudix hydrolase spans 6–149 (GFRPNVGIIL…KRDVYQLALT (144 aa)). The Nudix box signature appears at 38–59 (GGIKYGETPMQAMYRELHEETG).

It belongs to the Nudix hydrolase family. RppH subfamily. A divalent metal cation serves as cofactor.

Its function is as follows. Accelerates the degradation of transcripts by removing pyrophosphate from the 5'-end of triphosphorylated RNA, leading to a more labile monophosphorylated state that can stimulate subsequent ribonuclease cleavage. The chain is RNA pyrophosphohydrolase from Burkholderia lata (strain ATCC 17760 / DSM 23089 / LMG 22485 / NCIMB 9086 / R18194 / 383).